The chain runs to 688 residues: Methionine--tRNA ligase (688 aa).

Residues 15-25 (PYANGPIHLGH) carry the 'HIGH' region motif. 4 residues coordinate Zn(2+): Cys-146, Cys-149, Cys-159, and Cys-162. Residues 332-336 (KMSKS) carry the 'KMSKS' region motif. An ATP-binding site is contributed by Lys-335. The tract at residues 552–576 (AEAPKKADSKKATDTPVDTRPPLES) is disordered. Positions 554–564 (APKKADSKKAT) are enriched in basic and acidic residues. In terms of domain architecture, tRNA-binding spans 587–688 (DFAKIDLRIA…EGAQPGMRVK (102 aa)).

This sequence belongs to the class-I aminoacyl-tRNA synthetase family. MetG type 1 subfamily. As to quaternary structure, homodimer. Requires Zn(2+) as cofactor.

It is found in the cytoplasm. It carries out the reaction tRNA(Met) + L-methionine + ATP = L-methionyl-tRNA(Met) + AMP + diphosphate. Functionally, is required not only for elongation of protein synthesis but also for the initiation of all mRNA translation through initiator tRNA(fMet) aminoacylation. This Shewanella woodyi (strain ATCC 51908 / MS32) protein is Methionine--tRNA ligase.